A 798-amino-acid polypeptide reads, in one-letter code: ABC transporter G family member 4 (798 aa).

Positions 1–51 (MEDIGNNNFEIIDDKSDEKNDENFEDKNSRNNINEEQILSNQQQQQQQQQQ) are disordered. Basic and acidic residues predominate over residues 12 to 29 (IDDKSDEKNDENFEDKNS). A compositionally biased stretch (polar residues) spans 30-41 (RNNINEEQILSN). Residues 34–83 (NEEQILSNQQQQQQQQQQQQQQQQQQQQQQQQQQQQQQEQQQFKNEVINT) adopt a coiled-coil conformation. Positions 42–51 (QQQQQQQQQQ) are enriched in low complexity. Residues 211 to 464 (IDIEDIESQV…SIDSNYKCPP (254 aa)) enclose the ABC transporter domain. Residue 253–260 (GPSGSGKS) coordinates ATP. Transmembrane regions (helical) follow at residues 540–560 (VVFFSKIVIAILIGLLFSACF), 579–599 (LFFFIITSLNLLPYSSISTFV), 628–648 (IVSSFFVVLIITTIIYCIVHL), 656–676 (ILSLISFYMVFLASVFMVIAM), 687–707 (FSYCTGVSVVLVLFSGFLVPI), 713–733 (SFGWIHHIDYLFYGFSSIVII), and 771–791 (SIGILTIWIAFFYILAYIGLY). In terms of domain architecture, ABC transmembrane type-2 spans 540–793 (VVFFSKIVIA…ILAYIGLYKF (254 aa)).

It belongs to the ABC transporter superfamily. ABCG family. Eye pigment precursor importer (TC 3.A.1.204) subfamily.

It is found in the membrane. The chain is ABC transporter G family member 4 (abcG4) from Dictyostelium discoideum (Social amoeba).